A 95-amino-acid chain; its full sequence is Aspartyl/glutamyl-tRNA(Asn/Gln) amidotransferase subunit C (95 aa).

The protein belongs to the GatC family. As to quaternary structure, heterotrimer of A, B and C subunits.

It catalyses the reaction L-glutamyl-tRNA(Gln) + L-glutamine + ATP + H2O = L-glutaminyl-tRNA(Gln) + L-glutamate + ADP + phosphate + H(+). It carries out the reaction L-aspartyl-tRNA(Asn) + L-glutamine + ATP + H2O = L-asparaginyl-tRNA(Asn) + L-glutamate + ADP + phosphate + 2 H(+). Its function is as follows. Allows the formation of correctly charged Asn-tRNA(Asn) or Gln-tRNA(Gln) through the transamidation of misacylated Asp-tRNA(Asn) or Glu-tRNA(Gln) in organisms which lack either or both of asparaginyl-tRNA or glutaminyl-tRNA synthetases. The reaction takes place in the presence of glutamine and ATP through an activated phospho-Asp-tRNA(Asn) or phospho-Glu-tRNA(Gln). This chain is Aspartyl/glutamyl-tRNA(Asn/Gln) amidotransferase subunit C, found in Cereibacter sphaeroides (strain ATCC 17025 / ATH 2.4.3) (Rhodobacter sphaeroides).